The following is a 323-amino-acid chain: Serine/threonine-protein phosphatase PP1-gamma catalytic subunit B (323 aa).

Residues Asp-64, His-66, Asp-92, and Asn-124 each contribute to the Mn(2+) site. The Proton donor role is filled by His-125. 2 residues coordinate Mn(2+): His-173 and His-248. The segment at Lys-301–Lys-323 is disordered.

The protein belongs to the PPP phosphatase family. PP-1 subfamily. As to quaternary structure, PP1 comprises a catalytic subunit, ppp1c1, ppp1cb or ppp1cc, which is folded into its native form by inhibitor 2 and glycogen synthetase kinase 3, and then is complexed to one or several targeting or regulatory subunits. Mn(2+) is required as a cofactor.

It is found in the cytoplasm. The protein resides in the nucleus. The protein localises to the cleavage furrow. Its subcellular location is the nucleolus. It localises to the nucleoplasm. It is found in the chromosome. The protein resides in the centromere. The protein localises to the kinetochore. Its subcellular location is the nucleus speckle. It localises to the midbody. It is found in the mitochondrion. It catalyses the reaction O-phospho-L-seryl-[protein] + H2O = L-seryl-[protein] + phosphate. The catalysed reaction is O-phospho-L-threonyl-[protein] + H2O = L-threonyl-[protein] + phosphate. Functionally, protein phosphatase that associates with over 200 regulatory proteins to form highly specific holoenzymes which dephosphorylate hundreds of biological targets. Protein phosphatase 1 (PP1) is essential for cell division, and participates in the regulation of glycogen metabolism, muscle contractility and protein synthesis. Promotes nuclear envelope reassembly by targeting nuclear membrane vesicles to chromatin at the end of mitosis. Acts by dephosphorylating membrane proteins such as lamin B receptor (lbr) to regulate the binding of membrane proteins to chromatin. In Xenopus laevis (African clawed frog), this protein is Serine/threonine-protein phosphatase PP1-gamma catalytic subunit B (ppp1cc-b).